Here is a 94-residue protein sequence, read N- to C-terminus: Integration host factor subunit beta (94 aa).

Belongs to the bacterial histone-like protein family. Heterodimer of an alpha and a beta chain.

Its function is as follows. This protein is one of the two subunits of integration host factor, a specific DNA-binding protein that functions in genetic recombination as well as in transcriptional and translational control. This chain is Integration host factor subunit beta (ihfB), found in Serratia marcescens.